A 298-amino-acid polypeptide reads, in one-letter code: Zinc finger protein-like 1 homolog (298 aa).

The segment at 1-43 adopts a B box-type; degenerate zinc-finger fold; it reads MGLCKCPKRLVTNQFCFEHRVNVCEHCMVQSHPKCIVQSYLQW. The RING-type; atypical zinc-finger motif lies at 53–101; sequence CTLCGTTLEQGDCVRLVCYHVFHWDCLNARQAALPANTAPRGHQCPACT. Residues 199–230 form a disordered region; that stretch reads AGDYASSRRPLLPRQSPIGGTDRDDNKYQRRT. The residue at position 214 (Ser-214) is a Phosphoserine. Residues 255 to 275 form a helical membrane-spanning segment; it reads WFLVTAGILAFVLFVYLMAWL.

It belongs to the ZFPL1 family.

Its subcellular location is the membrane. The chain is Zinc finger protein-like 1 homolog from Drosophila erecta (Fruit fly).